The following is an 833-amino-acid chain: Transmembrane protease serine 7 (833 aa).

The Cytoplasmic segment spans residues 1–62 (MDKEKSDPSC…RAPFWNVQNK (62 aa)). A disordered region spans residues 30–49 (KLPGRRLPRKPIGKARPRKQ). Residues 32 to 49 (PGRRLPRKPIGKARPRKQ) are compositionally biased toward basic residues. A helical; Signal-anchor for type II membrane protein membrane pass occupies residues 63 to 83 (IILFTVFLFILAVTAWTLLWL). Residues 84–829 (YISKTDSKDA…NFVPWIHKYV (746 aa)) are Extracellular-facing. The region spanning 92-220 (DAFYFVGMFR…DSVVLNAGLR (129 aa)) is the SEA domain. N-linked (GlcNAc...) asparagine glycosylation is present at asparagine 196. Intrachain disulfides connect cysteine 233–cysteine 259, cysteine 285–cysteine 312, and cysteine 355–cysteine 386. 2 consecutive CUB domains span residues 233-350 (CSQY…FEVI) and 355-471 (CENT…YNIS). Asparagine 405 and asparagine 469 each carry an N-linked (GlcNAc...) asparagine glycan. LDL-receptor class A domains lie at 473–509 (PCPAGSFRCSSGLCVPQAQRCDGVNDCFDESDELFCV) and 548–585 (PCTNRTFKCGNDICFRKQNAQCDGIVDCPDRSDEEGCG). 7 disulfides stabilise this stretch: cysteine 474-cysteine 486, cysteine 481-cysteine 499, cysteine 493-cysteine 508, cysteine 549-cysteine 561, cysteine 556-cysteine 575, cysteine 569-cysteine 584, and cysteine 621-cysteine 637. The 235-residue stretch at 596–830 (VVGGSDSQEG…FVPWIHKYVP (235 aa)) folds into the Peptidase S1 domain. Residues histidine 636 and aspartate 684 each act as charge relay system in the active site. 3 disulfides stabilise this stretch: cysteine 720–cysteine 786, cysteine 752–cysteine 765, and cysteine 776–cysteine 806. Serine 780 functions as the Charge relay system in the catalytic mechanism.

Belongs to the peptidase S1 family. As to quaternary structure, forms a heterodimer with SERPINA5. In terms of processing, N-glycosylated.

It is found in the cell membrane. In terms of biological role, serine protease which preferentially hydrolyzes peptides with Arg at the P1 position. This Rattus norvegicus (Rat) protein is Transmembrane protease serine 7.